Reading from the N-terminus, the 145-residue chain is MIALIQRVTRASVTVEDEVTGEIGPGLLVLLGVQKEDDEQKANRLCERVLGYRIFSDADGKMNLNVQQAGGSVLVVSQFTLAADTERGMRPSFSGGAAPDRAQALYEYFVERCRQQAINTQTGRFAADMQVELVNDGPVTFWLQV.

The short motif at 137–138 is the Gly-cisPro motif, important for rejection of L-amino acids element; that stretch reads GP.

It belongs to the DTD family. As to quaternary structure, homodimer.

The protein resides in the cytoplasm. It catalyses the reaction glycyl-tRNA(Ala) + H2O = tRNA(Ala) + glycine + H(+). The catalysed reaction is a D-aminoacyl-tRNA + H2O = a tRNA + a D-alpha-amino acid + H(+). Functionally, an aminoacyl-tRNA editing enzyme that deacylates mischarged D-aminoacyl-tRNAs. Also deacylates mischarged glycyl-tRNA(Ala), protecting cells against glycine mischarging by AlaRS. Acts via tRNA-based rather than protein-based catalysis; rejects L-amino acids rather than detecting D-amino acids in the active site. By recycling D-aminoacyl-tRNA to D-amino acids and free tRNA molecules, this enzyme counteracts the toxicity associated with the formation of D-aminoacyl-tRNA entities in vivo and helps enforce protein L-homochirality. The chain is D-aminoacyl-tRNA deacylase from Salmonella agona (strain SL483).